Here is a 152-residue protein sequence, read N- to C-terminus: UPF0266 membrane protein YobD (152 aa).

The next 3 helical transmembrane spans lie at 6–26, 45–65, and 67–87; these read LVLI…QFIM, IDSV…VTNH, and ALIT…IFWI.

Belongs to the UPF0266 family.

It localises to the cell inner membrane. This Shigella boydii serotype 18 (strain CDC 3083-94 / BS512) protein is UPF0266 membrane protein YobD.